The following is a 331-amino-acid chain: Reticulocalbin-1 (331 aa).

A signal peptide spans 1 to 29; the sequence is MARGGRGRRLGLALGLLLALVLAPRVLRA. Asn-53 is a glycosylation site (N-linked (GlcNAc...) asparagine). At Ser-55 the chain carries Phosphoserine. The residue at position 76 (Thr-76) is a Phosphothreonine. 6 consecutive EF-hand domains span residues 79 to 114, 115 to 150, 166 to 201, 203 to 238, 244 to 279, and 280 to 315; these read ESKE…VQKR, YIFD…YYLG, KMLP…EEFE, MKEI…HEEN, WVLS…QDYD, and HAQA…FVGS. Ser-80 carries the phosphoserine; by FAM20C modification. Ca(2+)-binding residues include Asp-92, Asp-94, Asp-96, Glu-103, Asp-128, Asp-130, Asp-132, Lys-134, Glu-139, Asp-179, Asn-181, Asp-183, Thr-185, Glu-190, Asp-216, Asn-218, Asp-220, Glu-227, Asp-257, Asn-259, Asp-261, Lys-263, Glu-268, Asp-293, Asn-295, Asp-297, Lys-299, and Glu-304. Positions 328–331 match the Prevents secretion from ER motif; it reads HDEL.

The protein belongs to the CREC family. O-glycosylated. O-mannosylated by POMT1 and POMT2 and elongated by POMGNT1.

It is found in the endoplasmic reticulum lumen. Functionally, may regulate calcium-dependent activities in the endoplasmic reticulum lumen or post-ER compartment. In Homo sapiens (Human), this protein is Reticulocalbin-1 (RCN1).